The following is a 343-amino-acid chain: D-alanine--D-alanine ligase (343 aa).

In terms of domain architecture, ATP-grasp spans K129 to E335. E162–E217 lines the ATP pocket. Mg(2+) is bound by residues D288, E302, and N304.

Belongs to the D-alanine--D-alanine ligase family. It depends on Mg(2+) as a cofactor. Requires Mn(2+) as cofactor.

The protein resides in the cytoplasm. It catalyses the reaction 2 D-alanine + ATP = D-alanyl-D-alanine + ADP + phosphate + H(+). The protein operates within cell wall biogenesis; peptidoglycan biosynthesis. Functionally, cell wall formation. The sequence is that of D-alanine--D-alanine ligase from Clostridium novyi (strain NT).